Here is a 105-residue protein sequence, read N- to C-terminus: Multidrug resistance protein EbrA (105 aa).

4 consecutive transmembrane segments (helical) span residues 2–22, 35–55, 57–77, and 84–104; these read LVGYIFLTIAICSESIGAAML, ALVVIAYSLAFYMLSLTLNHI, LSLSYATWSGVGTVLTAVIGV, and LNAKGLIGILLLISGVVLLNW.

Belongs to the drug/metabolite transporter (DMT) superfamily. Small multidrug resistance (SMR) (TC 2.A.7.1) family. EbrA/EbrB subfamily. As to quaternary structure, the efflux pump is composed of EbrA and EbrB.

Its subcellular location is the cell membrane. Functionally, part of a multidrug efflux pump. Confers resistance to cationic lipophilic dyes such as ethidium bromide, acriflavine, pyronine Y and safranin O. The efflux is probably coupled to an influx of protons. In Bacillus atrophaeus, this protein is Multidrug resistance protein EbrA (ebrA).